We begin with the raw amino-acid sequence, 214 residues long: Thymidylate kinase (214 aa).

Gly10 to Thr17 contributes to the ATP binding site.

It belongs to the thymidylate kinase family.

The enzyme catalyses dTMP + ATP = dTDP + ADP. In terms of biological role, phosphorylation of dTMP to form dTDP in both de novo and salvage pathways of dTTP synthesis. In Levilactobacillus brevis (strain ATCC 367 / BCRC 12310 / CIP 105137 / JCM 1170 / LMG 11437 / NCIMB 947 / NCTC 947) (Lactobacillus brevis), this protein is Thymidylate kinase.